The primary structure comprises 295 residues: Acetylglutamate kinase (295 aa).

Substrate contacts are provided by residues 64–65 (GG), R86, and N179.

Belongs to the acetylglutamate kinase family. ArgB subfamily.

Its subcellular location is the cytoplasm. It catalyses the reaction N-acetyl-L-glutamate + ATP = N-acetyl-L-glutamyl 5-phosphate + ADP. The protein operates within amino-acid biosynthesis; L-arginine biosynthesis; N(2)-acetyl-L-ornithine from L-glutamate: step 2/4. Its function is as follows. Catalyzes the ATP-dependent phosphorylation of N-acetyl-L-glutamate. This is Acetylglutamate kinase from Thermosynechococcus vestitus (strain NIES-2133 / IAM M-273 / BP-1).